Reading from the N-terminus, the 756-residue chain is Catalase-peroxidase (756 aa).

A cross-link (tryptophyl-tyrosyl-methioninium (Trp-Tyr) (with M-270)) is located at residues 91 to 244 (WHSAGTYRTG…LAAVQMGLIY (154 aa)). The active-site Proton acceptor is His-92. Residues 198–230 (AQKKMQQPGDGTLVAEPENHANEESRTASGERN) are disordered. The segment covering 214–223 (PENHANEESR) has biased composition (basic and acidic residues). The tryptophyl-tyrosyl-methioninium (Tyr-Met) (with W-91) cross-link spans 244 to 270 (YVNPEGPEGVPDPVASAKDIRETFGRM). His-285 contacts heme b. Positions 371–390 (KNGAGAGKIPDAHDPSKRHA) are disordered.

The protein belongs to the peroxidase family. Peroxidase/catalase subfamily. As to quaternary structure, homodimer or homotetramer. Heme b serves as cofactor. In terms of processing, formation of the three residue Trp-Tyr-Met cross-link is important for the catalase, but not the peroxidase activity of the enzyme.

It catalyses the reaction H2O2 + AH2 = A + 2 H2O. The catalysed reaction is 2 H2O2 = O2 + 2 H2O. Its function is as follows. Bifunctional enzyme with both catalase and broad-spectrum peroxidase activity. This chain is Catalase-peroxidase, found in Pseudomonas savastanoi pv. phaseolicola (strain 1448A / Race 6) (Pseudomonas syringae pv. phaseolicola (strain 1448A / Race 6)).